A 131-amino-acid polypeptide reads, in one-letter code: Small ribosomal subunit protein uS8 (131 aa).

Belongs to the universal ribosomal protein uS8 family. Part of the 30S ribosomal subunit. Contacts proteins S5 and S12.

Functionally, one of the primary rRNA binding proteins, it binds directly to 16S rRNA central domain where it helps coordinate assembly of the platform of the 30S subunit. The polypeptide is Small ribosomal subunit protein uS8 (Hamiltonella defensa subsp. Acyrthosiphon pisum (strain 5AT)).